Consider the following 24-residue polypeptide: Pseudin-2 (24 aa).

In terms of tissue distribution, expressed by the skin glands.

The protein localises to the secreted. Functionally, antimicrobial peptide with activity against fungus (C.albicans) and Gram-positive and Gram-negative bacteria (S.aureus and E.coli). Also has low hemolytic activity against human erythrocytes. In Pseudis paradoxa (Paradoxical frog), this protein is Pseudin-2.